A 146-amino-acid polypeptide reads, in one-letter code: COP9 signalosome complex subunit 9 (146 aa).

The PCI domain maps to 1 to 107; that stretch reads MDSYKTQWLT…SVAREVKVLQ (107 aa).

In terms of assembly, component of a COP9 signalosome-like (CSN) complex.

It localises to the cytoplasm. The protein localises to the nucleus. Its function is as follows. Component of the COP9 signalosome (CSN) complex that acts as a regulator of the ubiquitin (Ubl) conjugation pathway by mediating the deneddylation of the cullin subunit of SCF-type E3 ubiquitin-protein ligase complexes. The CSN complex is involved in the regulation of the mating pheromone response. The chain is COP9 signalosome complex subunit 9 (CSN9) from Candida glabrata (strain ATCC 2001 / BCRC 20586 / JCM 3761 / NBRC 0622 / NRRL Y-65 / CBS 138) (Yeast).